The following is a 139-amino-acid chain: Class I hydrophobin A (139 aa).

An N-terminal signal peptide occupies residues 1-18 (MKFSIAAAVLALASAVVA). Disulfide bonds link Cys-45–Cys-113, Cys-53–Cys-107, Cys-54–Cys-88, and Cys-114–Cys-133.

It belongs to the fungal hydrophobin family. As to quaternary structure, self-assembles to form functional amyloid fibrils called rodlets. Self-assembly into fibrillar rodlets occurs spontaneously at hydrophobic:hydrophilic interfaces and the rodlets further associate laterally to form amphipathic monolayers.

It localises to the secreted. The protein resides in the cell wall. Functionally, aerial growth, conidiation, and dispersal of filamentous fungi in the environment rely upon a capability of their secreting small amphipathic proteins called hydrophobins (HPBs) with low sequence identity. Class I can self-assemble into an outermost layer of rodlet bundles on aerial cell surfaces, conferring cellular hydrophobicity that supports fungal growth, development and dispersal; whereas Class II form highly ordered films at water-air interfaces through intermolecular interactions but contribute nothing to the rodlet structure. HYPA is a class I hydrophobin that contributes to surface hydrophobicity, and prevents recognition by the cellular immune defense system. The protein is Class I hydrophobin A of Arthroderma benhamiae (strain ATCC MYA-4681 / CBS 112371) (Trichophyton mentagrophytes).